We begin with the raw amino-acid sequence, 885 residues long: DNA mismatch repair protein MutS (885 aa).

626 to 633 (GPNMGGKS) is a binding site for ATP.

The protein belongs to the DNA mismatch repair MutS family.

This protein is involved in the repair of mismatches in DNA. It is possible that it carries out the mismatch recognition step. This protein has a weak ATPase activity. The polypeptide is DNA mismatch repair protein MutS (Burkholderia ambifaria (strain MC40-6)).